A 153-amino-acid polypeptide reads, in one-letter code: ATP synthase subunit a (153 aa).

Helical transmembrane passes span 43–63 and 104–124; these read AFHL…LLIF and IAPL…VDLI.

It belongs to the ATPase A chain family. In terms of assembly, F-type ATPases have 2 components, CF(1) - the catalytic core - and CF(0) - the membrane proton channel. CF(1) has five subunits: alpha(3), beta(3), gamma(1), delta(1), epsilon(1). CF(0) has three main subunits: a(1), b(2) and c(9-12). The alpha and beta chains form an alternating ring which encloses part of the gamma chain. CF(1) is attached to CF(0) by a central stalk formed by the gamma and epsilon chains, while a peripheral stalk is formed by the delta and b chains.

It is found in the cell inner membrane. Key component of the proton channel; it plays a direct role in the translocation of protons across the membrane. The chain is ATP synthase subunit a (atpB) from Pseudomonas putida (Arthrobacter siderocapsulatus).